Reading from the N-terminus, the 207-residue chain is Cytochrome c biogenesis ATP-binding export protein CcmA (207 aa).

The 204-residue stretch at 4-207 (LEARELLCER…RISLTQTRAA (204 aa)) folds into the ABC transporter domain. 36 to 43 (GSNGAGKT) contributes to the ATP binding site.

Belongs to the ABC transporter superfamily. CcmA exporter (TC 3.A.1.107) family. The complex is composed of two ATP-binding proteins (CcmA) and two transmembrane proteins (CcmB).

It localises to the cell inner membrane. The enzyme catalyses heme b(in) + ATP + H2O = heme b(out) + ADP + phosphate + H(+). In terms of biological role, part of the ABC transporter complex CcmAB involved in the biogenesis of c-type cytochromes; once thought to export heme, this seems not to be the case, but its exact role is uncertain. Responsible for energy coupling to the transport system. This chain is Cytochrome c biogenesis ATP-binding export protein CcmA, found in Shigella sonnei (strain Ss046).